The following is a 623-amino-acid chain: Protein Atg16l2 (623 aa).

Residues 64–79 are compositionally biased toward basic and acidic residues; that stretch reads PKDAISTRHEDWREEV. The disordered stretch occupies residues 64 to 93; sequence PKDAISTRHEDWREEVSGTGPDQVSSPASL. Residues 116 to 229 are a coiled coil; sequence VKKSAALDTL…ANQALVSQEL (114 aa). 7 WD repeats span residues 338–377, 382–421, 424–458, 459–502, 504–543, 550–589, and 593–623; these read AHLS…LEAN, GAGG…SKET, GHKD…LGRA, YCSR…CIQV, PVQG…IRQV, KCSS…LETS, and PHCT…VLWH.

The protein belongs to the WD repeat ATG16 family. Homooligomer. Heterooligomer with ATG16L2. Interacts with ATG5. Self-oligomerizes to form a 800-kDa complex composed of ATG12-ATG5 and ATG16L2. Interacts with RAB33B. As to expression, widely expressed.

The protein resides in the cytoplasm. The protein localises to the cytosol. May play a role in regulating epithelial homeostasis in an ATG16L1-dependent manner. In Mus musculus (Mouse), this protein is Protein Atg16l2 (Atg16l2).